The primary structure comprises 502 residues: Probable cytosol aminopeptidase (502 aa).

Mn(2+) is bound by residues lysine 270 and aspartate 275. The active site involves lysine 282. Mn(2+) contacts are provided by aspartate 293, aspartate 352, and glutamate 354. The active site involves arginine 356.

This sequence belongs to the peptidase M17 family. It depends on Mn(2+) as a cofactor.

The protein resides in the cytoplasm. It carries out the reaction Release of an N-terminal amino acid, Xaa-|-Yaa-, in which Xaa is preferably Leu, but may be other amino acids including Pro although not Arg or Lys, and Yaa may be Pro. Amino acid amides and methyl esters are also readily hydrolyzed, but rates on arylamides are exceedingly low.. The enzyme catalyses Release of an N-terminal amino acid, preferentially leucine, but not glutamic or aspartic acids.. Presumably involved in the processing and regular turnover of intracellular proteins. Catalyzes the removal of unsubstituted N-terminal amino acids from various peptides. In Buchnera aphidicola subsp. Schizaphis graminum (strain Sg), this protein is Probable cytosol aminopeptidase.